The following is a 380-amino-acid chain: MAPSLKKIVLWSFLALPSPVNISIWWNIGSLLGLLLAMQIMTGIFLSLHYTPMMVSTFSSMVHIMRDVPGGWLVRASHANGASMFFMLMYAHIGRGVYYQSYILQPRTWLVGGNDFLLSMATAFLGYVLPWGQMSYWGATVITNLLSAVPYLGDSLVTWVWGCFSVNQATLNRFYSFHFLLPFVILVFVLVHLLLLHDKGSSNPLGNMSHVSKVSFHPYFTWKILWVFVLLCFLLYVLLCYITLMYLRTPKTFIEANPMVTPTHIQPEWYFLFAYAILRAIPSKIGGVVALAMSVLYLYTFPLALYSSAAATAYNFIGQLLFWGYVSLFFLLTWLGACPVEEPYISLALPLTVMFFVVPGLYMISSSYIIRSFQFLLSLK.

4 helical membrane-spanning segments follow: residues 28 to 48, 72 to 93, 109 to 129, and 174 to 194; these read IGSL…FLSL, WLVR…YAHI, WLVG…GYVL, and FYSF…VHLL. 2 residues coordinate heme b: His-78 and His-92. 2 residues coordinate heme b: His-178 and His-192. His-197 provides a ligand contact to a ubiquinone. 4 helical membrane-spanning segments follow: residues 222–243, 285–305, 317–337, and 344–364; these read WKIL…CYIT, IGGV…PLAL, IGQL…WLGA, and YISL…LYMI.

It belongs to the cytochrome b family. As to quaternary structure, the main subunits of complex b-c1 are: cytochrome b, cytochrome c1 and the Rieske protein. Heme b is required as a cofactor.

Its subcellular location is the mitochondrion inner membrane. In terms of biological role, component of the ubiquinol-cytochrome c reductase complex (complex III or cytochrome b-c1 complex) that is part of the mitochondrial respiratory chain. The b-c1 complex mediates electron transfer from ubiquinol to cytochrome c. Contributes to the generation of a proton gradient across the mitochondrial membrane that is then used for ATP synthesis. This is Cytochrome b (MT-CYB) from Cepaea nemoralis (Banded wood snail).